Consider the following 214-residue polypeptide: Response regulator GacA (214 aa).

The Response regulatory domain occupies 3 to 119; it reads KVLVVDDHDL…EMVQAIRLVF (117 aa). D54 bears the 4-aspartylphosphate mark. In terms of domain architecture, HTH luxR-type spans 143-208; it reads NNSPFDLLSE…ELALLAVRHG (66 aa). A DNA-binding region (H-T-H motif) is located at residues 167 to 186; sequence VQTISDKLCLSPKTVNTYRY.

Phosphorylated by LemA.

Forms part of a two-component regulatory system GacA/GacA(LemA). May be involved in lesion formation, swarming and in the production of extracellular protease, syringomycin and N-acyl-L-homoserine lactone (acyl-HSL). The chain is Response regulator GacA (gacA) from Pseudomonas syringae pv. syringae (strain B728a).